A 327-amino-acid polypeptide reads, in one-letter code: Ribosomal RNA large subunit methyltransferase F (327 aa).

This sequence belongs to the methyltransferase superfamily. METTL16/RlmF family.

It localises to the cytoplasm. The catalysed reaction is adenosine(1618) in 23S rRNA + S-adenosyl-L-methionine = N(6)-methyladenosine(1618) in 23S rRNA + S-adenosyl-L-homocysteine + H(+). Functionally, specifically methylates the adenine in position 1618 of 23S rRNA. The chain is Ribosomal RNA large subunit methyltransferase F from Marinomonas sp. (strain MWYL1).